A 1487-amino-acid polypeptide reads, in one-letter code: Protein clueless (1487 aa).

2 disordered regions span residues 1 to 94 (MALE…NGDA) and 110 to 140 (GATAAAGATEAAAEVGSSGDGGAATEGEAAA). Residues 56 to 65 (TKKKGKKNRN) show a composition bias toward basic residues. Over residues 111–126 (ATAAAGATEAAAEVGS) the composition is skewed to low complexity. Serine 284 is subject to Phosphoserine. The Clu domain maps to 438 to 680 (RAEDAFSSKL…RTFPPDVNFL (243 aa)). Residues 739–785 (QAEKELPSITEKQEEPEKEQAEKSSAEQPEKEKEKEKDKEDEQKESK) are compositionally biased toward basic and acidic residues. Disordered regions lie at residues 739 to 794 (QAEK…TKSA) and 980 to 1040 (VSSE…TAST). The span at 988-1005 (KQSRNNGGKHNKHNKSNK) shows a compositional bias: basic residues. A compositionally biased stretch (polar residues) spans 1009-1019 (PQSTSAAAATQ). Low complexity predominate over residues 1020–1040 (NGHSSTAANGSANSAANTAST). TPR repeat units follow at residues 1140–1173 (AYNFYTTGQAKIQQGLLKEGYELISEALNLLNNV), 1266–1299 (ALIDSNISLILHALGEYELSLRFIEHALKLNLKY), and 1301–1334 (GNKAMHVAVSYHLMARIQSCMGDFRSALNNEKET). Positions 1456-1487 (DTEQPKEGSEVEGATATQLTNGSEDSTTTVSS) are disordered. Residues 1470–1487 (TATQLTNGSEDSTTTVSS) show a composition bias toward polar residues.

Belongs to the CLU family.

The protein localises to the cytoplasm. Its function is as follows. mRNA-binding protein involved in proper cytoplasmic distribution of mitochondria. This is Protein clueless from Drosophila mojavensis (Fruit fly).